The chain runs to 194 residues: Protein GrpE (194 aa).

The interval 1–40 (MSRKHHKEQEEIQEQETISAGAAETPAEETAAIPAATEAD) is disordered. The segment covering 20–38 (AGAAETPAEETAAIPAATE) has biased composition (low complexity).

The protein belongs to the GrpE family. In terms of assembly, homodimer.

The protein localises to the cytoplasm. Its function is as follows. Participates actively in the response to hyperosmotic and heat shock by preventing the aggregation of stress-denatured proteins, in association with DnaK and GrpE. It is the nucleotide exchange factor for DnaK and may function as a thermosensor. Unfolded proteins bind initially to DnaJ; upon interaction with the DnaJ-bound protein, DnaK hydrolyzes its bound ATP, resulting in the formation of a stable complex. GrpE releases ADP from DnaK; ATP binding to DnaK triggers the release of the substrate protein, thus completing the reaction cycle. Several rounds of ATP-dependent interactions between DnaJ, DnaK and GrpE are required for fully efficient folding. The sequence is that of Protein GrpE from Chlorobaculum tepidum (strain ATCC 49652 / DSM 12025 / NBRC 103806 / TLS) (Chlorobium tepidum).